Consider the following 457-residue polypeptide: DNA repair protein RadA (457 aa).

The segment at 10 to 27 adopts a C4-type zinc-finger fold; sequence CQECGYESAKWMGKCPGC. 97–104 provides a ligand contact to ATP; the sequence is GDPGIGKS. Residues 254 to 258 carry the RadA KNRFG motif motif; the sequence is KNRFG. The interval 353 to 457 is lon-protease-like; the sequence is DAYVNVAGGV…QDALEVTLGR (105 aa).

Belongs to the RecA family. RadA subfamily.

Its function is as follows. DNA-dependent ATPase involved in processing of recombination intermediates, plays a role in repairing DNA breaks. Stimulates the branch migration of RecA-mediated strand transfer reactions, allowing the 3' invading strand to extend heteroduplex DNA faster. Binds ssDNA in the presence of ADP but not other nucleotides, has ATPase activity that is stimulated by ssDNA and various branched DNA structures, but inhibited by SSB. Does not have RecA's homology-searching function. The protein is DNA repair protein RadA of Halalkalibacterium halodurans (strain ATCC BAA-125 / DSM 18197 / FERM 7344 / JCM 9153 / C-125) (Bacillus halodurans).